Consider the following 285-residue polypeptide: Polyamine aminopropyltransferase (285 aa).

Residues 5–241 (DNWYIEHFQP…GWWSVTMASK (237 aa)) enclose the PABS domain. Q35 contributes to the S-methyl-5'-thioadenosine binding site. Residues H66 and D90 each contribute to the spermidine site. S-methyl-5'-thioadenosine contacts are provided by residues D110 and 141-142 (DG). The active-site Proton acceptor is D160. 160–163 (DSTD) contacts spermidine. Residue P167 participates in S-methyl-5'-thioadenosine binding.

It belongs to the spermidine/spermine synthase family. In terms of assembly, homodimer or homotetramer.

The protein resides in the cytoplasm. It catalyses the reaction S-adenosyl 3-(methylsulfanyl)propylamine + putrescine = S-methyl-5'-thioadenosine + spermidine + H(+). The protein operates within amine and polyamine biosynthesis; spermidine biosynthesis; spermidine from putrescine: step 1/1. Its function is as follows. Catalyzes the irreversible transfer of a propylamine group from the amino donor S-adenosylmethioninamine (decarboxy-AdoMet) to putrescine (1,4-diaminobutane) to yield spermidine. The chain is Polyamine aminopropyltransferase from Xanthomonas axonopodis pv. citri (strain 306).